A 515-amino-acid polypeptide reads, in one-letter code: MSSIIFIPNDADNINSIMVTISSSLSLVGCLFILSIYIYYKELREFQLKLIFIMTINDFIISIIFLIATHIQTKYFDAITNVFPFFCNFPDSLLHYFFLSSFFWEVCIAHTLIQVIKYNNDKVEDNLKKYFIFSNGLSALIMVSLFFIRSYSKIDCHHDSIFPHLLFFIPLLLTWIYNIIVCALLTKTFKEQAMNFGYSLGINGGSGSYINFTNNNSIDNYSNIIIKNDLIINNNNNINVNNNNNNINILFHVNVNNNNNKIIIKRIRKTPNIIWTSIFFLFSFGFIWSWSILVIILKYLSLDVKYILMISYFFIPLHGCMNAVCFGVNDRLRMNLKKSCKNYYYKFLGLFSLDKRKSYGINGNNKNNKNNNGANCEERSLIDYSPDDDDDEDDDNNNNNYSDGNYYQIPSPFLIDSRNSSNLTDYSVILDNNNNNNNNGPYNPTRSNSITELLYNNINSLNAIRILSNNNNNNNNNNNNNNNNNNNNNNINNNDNNNNNNNNNSFCTIDEDETK.

Residues Met-1–Ser-16 lie on the Extracellular side of the membrane. Residues Ile-17–Tyr-37 traverse the membrane as a helical segment. Over Ile-38 to Leu-50 the chain is Cytoplasmic. Residues Ile-51–Ile-71 form a helical membrane-spanning segment. At Gln-72–Ser-92 the chain is on the extracellular side. A helical membrane pass occupies residues Leu-93–Ile-113. Residues Gln-114–Lys-129 are Cytoplasmic-facing. A helical transmembrane segment spans residues Tyr-130 to Ser-150. Topologically, residues Tyr-151–His-164 are extracellular. A helical membrane pass occupies residues Leu-165 to Leu-185. The Cytoplasmic portion of the chain corresponds to Thr-186–Thr-276. The helical transmembrane segment at Ser-277–Leu-297 threads the bilayer. Topologically, residues Lys-298–Tyr-306 are extracellular. Residues Ile-307–Gly-327 traverse the membrane as a helical segment. The Cytoplasmic portion of the chain corresponds to Val-328 to Lys-515. Positions Asn-362–Asn-375 are enriched in low complexity. Disordered stretches follow at residues Asn-362–Ile-409 and Asn-469–Lys-515. Over residues Ser-385–Asn-396 the composition is skewed to acidic residues. Composition is skewed to low complexity over residues Asn-397–Tyr-407 and Asn-469–Asn-504.

This sequence belongs to the G-protein coupled receptor 5 family.

The protein localises to the membrane. In terms of biological role, receptor for cAMP. The chain is Cyclic AMP receptor-like protein G (crlG) from Dictyostelium discoideum (Social amoeba).